Here is a 595-residue protein sequence, read N- to C-terminus: Transketolase-like protein 1 (595 aa).

Gly-93–Pro-95 provides a ligand contact to thiamine diphosphate. Mg(2+)-binding residues include Asp-125, Asn-155, and Ile-157. A thiamine diphosphate-binding site is contributed by Asn-155. Thiamine diphosphate-binding residues include Lys-217, Glu-339, and Phe-365. The active-site Proton donor is Glu-339. 2 residues coordinate substrate: His-389 and Asp-397. His-401 provides a ligand contact to thiamine diphosphate.

It belongs to the transketolase family. In terms of assembly, homodimer. Mg(2+) is required as a cofactor. Ca(2+) serves as cofactor. Requires Mn(2+) as cofactor. The cofactor is Co(2+). It depends on thiamine diphosphate as a cofactor. In terms of tissue distribution, not expressed in the embryonic neocortex.

The protein resides in the cytoplasm. It carries out the reaction D-sedoheptulose 7-phosphate + D-glyceraldehyde 3-phosphate = aldehydo-D-ribose 5-phosphate + D-xylulose 5-phosphate. Catalyzes the transfer of a two-carbon ketol group from a ketose donor to an aldose acceptor, via a covalent intermediate with the cofactor thiamine pyrophosphate. In Mus musculus (Mouse), this protein is Transketolase-like protein 1.